We begin with the raw amino-acid sequence, 277 residues long: 3-methyl-2-oxobutanoate hydroxymethyltransferase (277 aa).

Residues Asp43 and Asp82 each contribute to the Mg(2+) site. 3-methyl-2-oxobutanoate is bound by residues 43 to 44 (DS), Asp82, and Lys112. Glu114 lines the Mg(2+) pocket. Catalysis depends on Glu181, which acts as the Proton acceptor.

This sequence belongs to the PanB family. Homodecamer; pentamer of dimers. It depends on Mg(2+) as a cofactor.

Its subcellular location is the cytoplasm. It catalyses the reaction 3-methyl-2-oxobutanoate + (6R)-5,10-methylene-5,6,7,8-tetrahydrofolate + H2O = 2-dehydropantoate + (6S)-5,6,7,8-tetrahydrofolate. It participates in cofactor biosynthesis; (R)-pantothenate biosynthesis; (R)-pantoate from 3-methyl-2-oxobutanoate: step 1/2. Its function is as follows. Catalyzes the reversible reaction in which hydroxymethyl group from 5,10-methylenetetrahydrofolate is transferred onto alpha-ketoisovalerate to form ketopantoate. In Bacillus subtilis (strain 168), this protein is 3-methyl-2-oxobutanoate hydroxymethyltransferase.